We begin with the raw amino-acid sequence, 640 residues long: 1-deoxy-D-xylulose-5-phosphate synthase (640 aa).

Thiamine diphosphate-binding positions include His-79 and 120-122 (GHS). Asp-151 serves as a coordination point for Mg(2+). Residues 152–153 (GA), Asn-180, Tyr-287, and Glu-369 each bind thiamine diphosphate. Asn-180 contacts Mg(2+).

It belongs to the transketolase family. DXPS subfamily. Homodimer. Mg(2+) is required as a cofactor. It depends on thiamine diphosphate as a cofactor.

It catalyses the reaction D-glyceraldehyde 3-phosphate + pyruvate + H(+) = 1-deoxy-D-xylulose 5-phosphate + CO2. The protein operates within metabolic intermediate biosynthesis; 1-deoxy-D-xylulose 5-phosphate biosynthesis; 1-deoxy-D-xylulose 5-phosphate from D-glyceraldehyde 3-phosphate and pyruvate: step 1/1. Catalyzes the acyloin condensation reaction between C atoms 2 and 3 of pyruvate and glyceraldehyde 3-phosphate to yield 1-deoxy-D-xylulose-5-phosphate (DXP). This chain is 1-deoxy-D-xylulose-5-phosphate synthase, found in Thioalkalivibrio sulfidiphilus (strain HL-EbGR7).